We begin with the raw amino-acid sequence, 308 residues long: Probable D,D-dipeptide transport ATP-binding protein DdpF (308 aa).

An ABC transporter domain is found at 8-243; sequence LRDVHINFPA…PAHPYTRLLL (236 aa). 49 to 56 provides a ligand contact to ATP; that stretch reads GESGCGKS.

This sequence belongs to the ABC transporter superfamily. The complex is composed of two ATP-binding proteins (DdpD and DdpF), two transmembrane proteins (DdpB and DdpC) and a solute-binding protein (DdpA).

The protein localises to the cell inner membrane. In terms of biological role, part of the ABC transporter complex DdpABCDF, which is probably involved in D,D-dipeptide transport. Probably responsible for energy coupling to the transport system. This is Probable D,D-dipeptide transport ATP-binding protein DdpF from Escherichia coli (strain K12).